A 387-amino-acid polypeptide reads, in one-letter code: Sharpin (387 aa).

The segment at 1–180 (MAPPAGGAAA…EREELAGSLA (180 aa)) is self-association. Over residues 122–132 (EGQNGSKSNSP) the composition is skewed to polar residues. Residues 122–169 (EGQNGSKSNSPPALGPEACPVSLPSPPEASTLKGPPPEADLPRSPGNL) are disordered. Position 165 is a phosphoserine (Ser-165). An interaction with SHANK1 region spans residues 175–310 (LAGSLARAIA…SAPREAPATG (136 aa)). Positions 219–288 (IRLQVTLEDA…PERSLASYGV (70 aa)) constitute a Ubiquitin-like domain. The segment at 305 to 349 (EAPATGPSPQHPQKMDGELGRLFPPSLGLPPGPQPAASSLPSPLQ) is disordered. At Ser-312 the chain carries Phosphoserine. Residues 339–349 (PAASSLPSPLQ) are compositionally biased toward low complexity. The RanBP2-type zinc finger occupies 348–377 (LQPSWSCPSCTFINAPDRPGCEMCSTQRPC).

As to quaternary structure, monomer and homodimer. Component of the LUBAC complex (linear ubiquitin chain assembly complex) which consists of SHARPIN, RBCK1 and RNF31. LUBAC has a MW of approximately 600 kDa suggesting a heteromultimeric assembly of its subunits. Associates with the TNF-R1 signaling complex (TNF-RSC) in a stimulation-dependent manner. Interacts with EYA1, EYA2, SHANK1 and SHANK3 (via ANK repeats). In terms of tissue distribution, highly expressed in skeletal muscle and placenta and at lower levels in brain, heart, colon without mucosa, thymus, spleen, kidney, liver, small intestine, lung and peripheral blood leukocytes. Up-regulated in various tumor tissues such as kidney, liver, ovary and pancreas tumors.

The protein localises to the cytoplasm. It is found in the cytosol. Its subcellular location is the synapse. It functions in the pathway protein modification; protein ubiquitination. In terms of biological role, component of the LUBAC complex which conjugates linear polyubiquitin chains in a head-to-tail manner to substrates and plays a key role in NF-kappa-B activation and regulation of inflammation. LUBAC conjugates linear polyubiquitin to IKBKG and RIPK1 and is involved in activation of the canonical NF-kappa-B and the JNK signaling pathways. Linear ubiquitination mediated by the LUBAC complex interferes with TNF-induced cell death and thereby prevents inflammation. LUBAC is recruited to the TNF-R1 signaling complex (TNF-RSC) following polyubiquitination of TNF-RSC components by BIRC2 and/or BIRC3 and to conjugate linear polyubiquitin to IKBKG and possibly other components contributing to the stability of the complex. The LUBAC complex is also involved in innate immunity by conjugating linear polyubiquitin chains at the surface of bacteria invading the cytosol to form the ubiquitin coat surrounding bacteria. LUBAC is not able to initiate formation of the bacterial ubiquitin coat, and can only promote formation of linear polyubiquitins on pre-existing ubiquitin. The bacterial ubiquitin coat acts as an 'eat-me' signal for xenophagy and promotes NF-kappa-B activation. Together with OTULIN, the LUBAC complex regulates the canonical Wnt signaling during angiogenesis. This chain is Sharpin, found in Homo sapiens (Human).